The sequence spans 714 residues: Forkhead box protein P2 (714 aa).

A compositionally biased stretch (polar residues) spans Met1–Asp28. Disordered stretches follow at residues Met1–Ser45 and Lys284–Ser338. Over residues Thr291–Ser304 the composition is skewed to low complexity. The segment covering Ser314 to Leu323 has biased composition (polar residues). The segment covering Ala325–Gly336 has biased composition (basic and acidic residues). The C2H2-type zinc finger occupies Gly345–His370. The segment at Val387–Leu408 is leucine-zipper. The CTBP1-binding stretch occupies residues Pro421 to Val425. Low complexity predominate over residues Thr437 to Gln458. The tract at residues Thr437 to Thr464 is disordered. Residues Arg503–Leu593 constitute a DNA-binding region (fork-head). Disordered regions lie at residues Leu648–Ile667 and Val677–Glu714. Positions Leu698–Glu714 are enriched in acidic residues.

Forms homodimers and heterodimers with FOXP1 and FOXP4. Dimerization is required for DNA-binding. Interacts with CTBP1. Interacts with FOXP1. Interacts with TBR1. Interacts with ZMYM2.

It localises to the nucleus. Functionally, transcriptional repressor that may play a role in the specification and differentiation of lung epithelium. May also play a role in developing neural, gastrointestinal and cardiovascular tissues. Can act with CTBP1 to synergistically repress transcription but CTPBP1 is not essential. Plays a role in synapse formation by regulating SRPX2 levels. This is Forkhead box protein P2 (FOXP2) from Macaca mulatta (Rhesus macaque).